Consider the following 501-residue polypeptide: Glutamyl-tRNA(Gln) amidotransferase subunit A (501 aa).

Residues Lys-80 and Ser-155 each act as charge relay system in the active site. Ser-179 serves as the catalytic Acyl-ester intermediate.

This sequence belongs to the amidase family. GatA subfamily. Heterotrimer of A, B and C subunits.

It carries out the reaction L-glutamyl-tRNA(Gln) + L-glutamine + ATP + H2O = L-glutaminyl-tRNA(Gln) + L-glutamate + ADP + phosphate + H(+). Allows the formation of correctly charged Gln-tRNA(Gln) through the transamidation of misacylated Glu-tRNA(Gln) in organisms which lack glutaminyl-tRNA synthetase. The reaction takes place in the presence of glutamine and ATP through an activated gamma-phospho-Glu-tRNA(Gln). The protein is Glutamyl-tRNA(Gln) amidotransferase subunit A of Cutibacterium acnes (strain DSM 16379 / KPA171202) (Propionibacterium acnes).